The sequence spans 296 residues: Ribosomal RNA small subunit methyltransferase A (296 aa).

Residues Asn30, Leu32, Gly57, Glu78, Asp103, and Asn128 each contribute to the S-adenosyl-L-methionine site.

This sequence belongs to the class I-like SAM-binding methyltransferase superfamily. rRNA adenine N(6)-methyltransferase family. RsmA subfamily.

The protein resides in the cytoplasm. It catalyses the reaction adenosine(1518)/adenosine(1519) in 16S rRNA + 4 S-adenosyl-L-methionine = N(6)-dimethyladenosine(1518)/N(6)-dimethyladenosine(1519) in 16S rRNA + 4 S-adenosyl-L-homocysteine + 4 H(+). Its function is as follows. Specifically dimethylates two adjacent adenosines (A1518 and A1519) in the loop of a conserved hairpin near the 3'-end of 16S rRNA in the 30S particle. May play a critical role in biogenesis of 30S subunits. This Staphylococcus carnosus (strain TM300) protein is Ribosomal RNA small subunit methyltransferase A.